The sequence spans 421 residues: Phosphoglycerate kinase (421 aa).

Positions 23, 24, 25, 26, 41, 42, 65, 66, 68, 69, 124, 125, 172, and 173 each coordinate (2R)-3-phosphoglycerate. Residue G216 coordinates ADP. G216 lines the CDP pocket. K218 contributes to the AMP binding site. D221 contacts CDP. D221 is a binding site for Mg(2+). Position 222 (K222) interacts with AMP. K222 lines the ATP pocket. An ADP-binding site is contributed by G240. CDP is bound at residue G240. AMP is bound by residues G241 and G315. The ATP site is built by G241 and G315. CDP-binding residues include G340 and F345. An ADP-binding site is contributed by F345. Residue E346 coordinates AMP. E346, D377, and T378 together coordinate ATP. D377 contributes to the Mg(2+) binding site.

This sequence belongs to the phosphoglycerate kinase family. In terms of assembly, monomer. The cofactor is Mg(2+).

Its subcellular location is the cytoplasm. It is found in the mitochondrion. The enzyme catalyses (2R)-3-phosphoglycerate + ATP = (2R)-3-phospho-glyceroyl phosphate + ADP. Its pathway is carbohydrate degradation; glycolysis; pyruvate from D-glyceraldehyde 3-phosphate: step 2/5. Its function is as follows. Catalyzes one of the two ATP producing reactions in the glycolytic pathway via the reversible conversion of 1,3-diphosphoglycerate to 3-phosphoglycerate. Both L- and D- forms of purine and pyrimidine nucleotides can be used as substrates, but the activity is much lower on pyrimidines. Negatively regulates the biosynthesis of acetyl-CoA from pyruvate in the mitochondrion. This is Phosphoglycerate kinase (pgkA) from Emericella nidulans (strain FGSC A4 / ATCC 38163 / CBS 112.46 / NRRL 194 / M139) (Aspergillus nidulans).